The chain runs to 163 residues: Bacterial microcompartment assembly protein PduM (163 aa).

Belongs to the PduM family. Interacts with shell protein PduK.

The protein localises to the bacterial microcompartment. It participates in polyol metabolism; 1,2-propanediol degradation. In terms of biological role, plays an essential role in assembly and/or stability of the bacterial microcompartment (BMC) dedicated to 1,2-propanediol (1,2-PD) degradation. Expression of a cosmid containing the full 21-gene pdu operon in E.coli allows E.coli to grow on 1,2-propanediol (1,2-PD) with the appearance of bacterial microcompartments (BMC) in its cytoplasm. Functionally, the 1,2-PD-specific bacterial microcompartment (BMC) concentrates low levels of 1,2-PD catabolic enzymes, concentrates volatile reaction intermediates thus enhancing pathway flux and keeps the level of toxic, mutagenic propionaldehyde low. The protein is Bacterial microcompartment assembly protein PduM of Citrobacter freundii.